We begin with the raw amino-acid sequence, 251 residues long: SPbeta prophage-derived putative antirepressor protein YoqD (251 aa).

The chain is SPbeta prophage-derived putative antirepressor protein YoqD (yoqD) from Bacillus subtilis (strain 168).